Consider the following 192-residue polypeptide: Ribosome maturation factor RimP (192 aa).

It belongs to the RimP family.

The protein resides in the cytoplasm. Functionally, required for maturation of 30S ribosomal subunits. This Delftia acidovorans (strain DSM 14801 / SPH-1) protein is Ribosome maturation factor RimP.